Reading from the N-terminus, the 311-residue chain is MSDILNVSQQREAITKAAAYISAILEPHFKNTTNFEPPRTLIICGSGLGGISTKLSRDNPPPVTVPYQDIPGFKKSTVPGHSGTLMFGSMNGSPVVLMNGRLHGYEGNTLFETTFPIRVLNHMGHVRNLIVTNAAGGINAKYQACDLMCIYDHLNIPGLAGQHPLRGPNLDEDGPRFLALSDAYDLELRKLLFKKWKELKIQRPLHEGTYTFVSGPTFETRAESKMIRMLGGDAVGMSTVPEVIVARHCGWRVLALSLITNTCVVDSPASALDESPVPLEKGKATHAEVLENGKIASNDVQNLIAAVMGEL.

Residue Ser-2 is modified to N-acetylserine. Residues Ser-46, His-81, 101–103 (RLH), and Ala-134 each bind phosphate. Glu-219 contacts a purine D-ribonucleoside. Ser-238 serves as a coordination point for phosphate. Residue Asn-261 participates in a purine D-ribonucleoside binding. Ser-275 is modified (phosphoserine).

The protein belongs to the PNP/MTAP phosphorylase family.

The enzyme catalyses a purine D-ribonucleoside + phosphate = a purine nucleobase + alpha-D-ribose 1-phosphate. Its pathway is purine metabolism; purine nucleoside salvage. In terms of biological role, the purine nucleoside phosphorylases catalyze the phosphorolytic breakdown of the N-glycosidic bond in the beta-(deoxy)ribonucleoside molecules, with the formation of the corresponding free purine bases and pentose-1-phosphate. Cleaves guanosine and inosine. This is Purine nucleoside phosphorylase (PNP1) from Saccharomyces cerevisiae (strain ATCC 204508 / S288c) (Baker's yeast).